The primary structure comprises 101 residues: Small ribosomal subunit protein uS14 (101 aa).

Belongs to the universal ribosomal protein uS14 family. Part of the 30S ribosomal subunit. Contacts proteins S3 and S10.

Binds 16S rRNA, required for the assembly of 30S particles and may also be responsible for determining the conformation of the 16S rRNA at the A site. This chain is Small ribosomal subunit protein uS14, found in Brucella abortus (strain 2308).